Here is a 1588-residue protein sequence, read N- to C-terminus: Ubiquitin carboxyl-terminal hydrolase 54 (1588 aa).

Residue Arg12 is modified to Omega-N-methylarginine. Residues 31-352 form the USP domain; the sequence is KGLSNEPGQN…QPLLLLYADP (322 aa). The active-site Nucleophile is Cys42. Zn(2+) contacts are provided by His67, Cys69, Cys74, Cys77, His133, Cys145, Cys150, His153, Cys166, Cys169, Cys225, and Cys229. His302 functions as the Proton acceptor in the catalytic mechanism. Composition is skewed to basic and acidic residues over residues 380-391 and 424-434; these read DSGHLTDSECNQ and SEGETLKEKQA. Disordered stretches follow at residues 380–447 and 459–519; these read DSGH…TSRL and HSRP…PTWR. Ser424 is subject to Phosphoserine. 2 stretches are compositionally biased toward polar residues: residues 436–445 and 459–471; these read RNASKSSSTS and HSRP…TNAA. The span at 499 to 512 shows a compositional bias: low complexity; sequence TESTSSEARSSSSS. A phosphoserine mark is found at Ser574, Ser613, and Ser616. The span at 601-616 shows a compositional bias: low complexity; the sequence is ESGYESSERNSSSPVS. Residues 601 to 620 form a disordered region; that stretch reads ESGYESSERNSSSPVSLDAA. Positions 678–712 form a coiled coil; the sequence is TSKSELDELQEEVARRAQEQELRKKREKELEAAKG. 5 disordered regions span residues 801–839, 856–895, 950–969, 1093–1172, and 1525–1562; these read RSLQ…EQSV, DSEL…SPPG, EDNS…TTQD, TRDV…SRRR, and GSVL…SAGE. Low complexity predominate over residues 808-825; that stretch reads QQQPPSQQPVQPSASLPS. Polar residues predominate over residues 878–895; the sequence is SLVSPSPAQSVSQHSPPG. Ser1138 is modified (phosphoserine). Over residues 1536-1547 the composition is skewed to basic and acidic residues; sequence RRIDVPPDDDGR.

The protein belongs to the peptidase C19 family.

The enzyme catalyses Thiol-dependent hydrolysis of ester, thioester, amide, peptide and isopeptide bonds formed by the C-terminal Gly of ubiquitin (a 76-residue protein attached to proteins as an intracellular targeting signal).. Functionally, deubiquitinase that specifically mediates 'Lys-63'-linked deubiquitination of substrates with a polyubiquitin chain composed of at least 3 ubiquitins. Specifically recognizes ubiquitin chain in position S2 and catalyzes cleavage of polyubiquitin within 'Lys-63'-linked chains. Not able to deubiquitinate substrates with shorter ubiquitin chains. Mediates deubiquitination of PLK4, maintaining PLK4 stability by reducing its ubiquitination-mediated degradation. In Rattus norvegicus (Rat), this protein is Ubiquitin carboxyl-terminal hydrolase 54 (Usp54).